A 273-amino-acid polypeptide reads, in one-letter code: 2-dehydro-3-deoxyphosphooctonate aldolase (273 aa).

Belongs to the KdsA family.

Its subcellular location is the cytoplasm. It catalyses the reaction D-arabinose 5-phosphate + phosphoenolpyruvate + H2O = 3-deoxy-alpha-D-manno-2-octulosonate-8-phosphate + phosphate. It participates in carbohydrate biosynthesis; 3-deoxy-D-manno-octulosonate biosynthesis; 3-deoxy-D-manno-octulosonate from D-ribulose 5-phosphate: step 2/3. It functions in the pathway bacterial outer membrane biogenesis; lipopolysaccharide biosynthesis. The protein is 2-dehydro-3-deoxyphosphooctonate aldolase of Geobacter sp. (strain M21).